We begin with the raw amino-acid sequence, 208 residues long: uncharacterized protein (208 aa).

The J domain occupies 4 to 71 (DYYAILNITP…SRRAQYDRES (68 aa)). Residues 67 to 100 (YDRESASSSAKPRQSFFSRTNPQPQSQSQQGGPS) form a disordered region. Residues 72–87 (ASSSAKPRQSFFSRTN) show a composition bias toward polar residues. The span at 88–100 (PQPQSQSQQGGPS) shows a compositional bias: low complexity. The helical transmembrane segment at 127–147 (GIANAFWTIVGTLAGAALGFI) threads the bilayer.

Belongs to the DnaJ family.

Its subcellular location is the endoplasmic reticulum membrane. This is an uncharacterized protein from Schizosaccharomyces pombe (strain 972 / ATCC 24843) (Fission yeast).